The primary structure comprises 534 residues: Serine/threonine-protein phosphatase 2B catalytic subunit (534 aa).

Asp88, His90, and Asp116 together coordinate Fe cation. Residues Asp116 and Asn148 each coordinate Zn(2+). His149 serves as the catalytic Proton donor. Residues His197 and His279 each coordinate Zn(2+). Disordered regions lie at residues 375 to 398 (LEDETPTSVSPSAPSPPLPMDVES) and 475 to 534 (PSHE…TREA). 2 stretches are compositionally biased toward basic and acidic residues: residues 475–497 (PSHEEVIKRSEEERRAALERAQQ) and 524–534 (QRDAARETREA).

The protein belongs to the PPP phosphatase family. PP-2B subfamily. In terms of assembly, composed of two components (A and B), the A component is the catalytic subunit and the B component confers calcium sensitivity. Fe(3+) serves as cofactor. It depends on Zn(2+) as a cofactor.

The catalysed reaction is O-phospho-L-seryl-[protein] + H2O = L-seryl-[protein] + phosphate. The enzyme catalyses O-phospho-L-threonyl-[protein] + H2O = L-threonyl-[protein] + phosphate. Its function is as follows. Calcium-dependent, calmodulin-stimulated protein phosphatase. This subunit may have a role in the calmodulin activation of calcineurin. The chain is Serine/threonine-protein phosphatase 2B catalytic subunit (cnaA) from Aspergillus fumigatus (strain ATCC MYA-4609 / CBS 101355 / FGSC A1100 / Af293) (Neosartorya fumigata).